Consider the following 182-residue polypeptide: MTIEPKGKYMESRGIFLYINHNTRTTKGYYYVRKTTDDSKGRLKDDEKRYPVKMEHNQIIPTKPIPNDKLKKEIENFKFFVQYANFKDINDYKNGDISYNPNIPSYSAKYQLNNNDYNVKQLRKRYDIPTNQAPKLLLKGDGDLKGSSVGSKNLEFTFVENKEEDIFFTDAVQFTPSEDDES.

This sequence belongs to the staphylococcal tandem lipoprotein family.

This is an uncharacterized protein from Staphylococcus haemolyticus (strain JCSC1435).